Here is a 228-residue protein sequence, read N- to C-terminus: Ribonuclease S-4 (228 aa).

An N-terminal signal peptide occupies residues 1–27 (MGITGMTYMFTMVLSLIVLIFSASTVG). Glutamine 36 contributes to the RNA binding site. Cysteine 42 and cysteine 49 are oxidised to a cystine. Histidine 60 lines the RNA pocket. The active-site Proton donor is histidine 60. Cysteine 75 and cysteine 119 are disulfide-bonded. Residue asparagine 87 is glycosylated (N-linked (GlcNAc) asparagine). 98 to 99 (NV) serves as a coordination point for RNA. The N-linked (GlcNAc...) asparagine glycan is linked to asparagine 101. Residues phenylalanine 108, 111-112 (RE), and 115-116 (KH) contribute to the RNA site. Glutamate 112 is a catalytic residue. Residue histidine 116 is the Proton acceptor of the active site. N-linked (GlcNAc...) asparagine glycans are attached at residues asparagine 144, asparagine 160, and asparagine 175. 2 cysteine pairs are disulfide-bonded: cysteine 183-cysteine 222 and cysteine 199-cysteine 210.

Belongs to the RNase T2 family. Post-translationally, the N-glycans attached at Asn-101, Asn-160 and Asn-175 consist predominantly of disaccharide (GlcNAc-GlcNAc). The N-glycan at 87 is 53% monosaccharide and 47% disaccharide. The N-glycan at Asn-144 contains mannose and xylose.

It is found in the secreted. Its subcellular location is the extracellular space. The catalysed reaction is a ribonucleotidyl-ribonucleotide-RNA + H2O = a 3'-end 3'-phospho-ribonucleotide-RNA + a 5'-end dephospho-ribonucleoside-RNA + H(+). Functionally, self-incompatibility (SI) is the inherited ability of a flowering plant to prevent self-fertilization by discriminating between self and non-self pollen during pollination. In many species, self-incompatibility is controlled by the single, multiallelic locus S. The sequence is that of Ribonuclease S-4 from Pyrus pyrifolia (Chinese pear).